The following is a 400-amino-acid chain: MEFGDLRIDESLIKTCQEKGITRPTEVQRQVIPAVLGGGDVIAVSQTGSGKTLAFVLPIVSHLLQKNRSFYCLVVAPTRELSSQIAECFNMFQATGLRVCLLVGGANFNVQANQLSKRPHVVVGTPGRIAEHVLKTKSFRTERVRKFVLDEADRFFEQDFVEDLETIIPSLREKRQTLLFTATMSDEISKLSSSILKRPKTIRTAEKYETVPALKEYYLFVAMKWKNSALVELLEMSQGMSVIVFVSMCVTARVMSLALARLGFCSEALHGELSQEKREEAMRSFKESRFNVLVCTDLGSRGLDISHVDLVINFDVPKSGKDYIHRVGRTARAGRSGTAITLVTQYDVEQIQKIEFTLEKKLEEFKMMKKNFGTICARIEEAIQEAQETLKEERKRNRRP.

Positions 1–29 match the Q motif motif; it reads MEFGDLRIDESLIKTCQEKGITRPTEVQR. A Helicase ATP-binding domain is found at 32 to 202; it reads IPAVLGGGDV…SSILKRPKTI (171 aa). 45 to 52 is a binding site for ATP; it reads SQTGSGKT. The short motif at 150–153 is the DEAD box element; it reads DEAD. The Helicase C-terminal domain maps to 229–373; sequence ALVELLEMSQ…EFKMMKKNFG (145 aa).

The protein belongs to the DEAD box helicase family. DDX47/RRP3 subfamily. In terms of assembly, interacts with the SSU processome.

Its subcellular location is the nucleus. The enzyme catalyses ATP + H2O = ADP + phosphate + H(+). ATP-dependent rRNA helicase required for pre-ribosomal RNA processing. Involved in the maturation of the 35S-pre-rRNA and to its cleavage to mature 18S rRNA. The sequence is that of ATP-dependent rRNA helicase RRP3 from Encephalitozoon cuniculi (strain GB-M1) (Microsporidian parasite).